We begin with the raw amino-acid sequence, 97 residues long: ATP-dependent Clp protease adapter protein ClpS (97 aa).

The protein belongs to the ClpS family. In terms of assembly, binds to the N-terminal domain of the chaperone ClpA.

In terms of biological role, involved in the modulation of the specificity of the ClpAP-mediated ATP-dependent protein degradation. The sequence is that of ATP-dependent Clp protease adapter protein ClpS from Nostoc sp. (strain PCC 7120 / SAG 25.82 / UTEX 2576).